The primary structure comprises 312 residues: Sulfate adenylyltransferase subunit 2 (312 aa).

Belongs to the PAPS reductase family. CysD subfamily. Heterodimer composed of CysD, the smaller subunit, and CysN.

The enzyme catalyses sulfate + ATP + H(+) = adenosine 5'-phosphosulfate + diphosphate. Its pathway is sulfur metabolism; hydrogen sulfide biosynthesis; sulfite from sulfate: step 1/3. In terms of biological role, with CysN forms the ATP sulfurylase (ATPS) that catalyzes the adenylation of sulfate producing adenosine 5'-phosphosulfate (APS) and diphosphate, the first enzymatic step in sulfur assimilation pathway. APS synthesis involves the formation of a high-energy phosphoric-sulfuric acid anhydride bond driven by GTP hydrolysis by CysN coupled to ATP hydrolysis by CysD. In Methylobacterium nodulans (strain LMG 21967 / CNCM I-2342 / ORS 2060), this protein is Sulfate adenylyltransferase subunit 2.